The primary structure comprises 347 residues: Epimerase family protein SDR39U1 homolog, chloroplastic (347 aa).

A chloroplast-targeting transit peptide spans 1-37 (MELLCSPTSLSSSFALSSALLVPRSFSMPGTRRFMVL). NADP(+) is bound by residues 54–57 (TGFI), 76–77 (TR), 115–119 (LAGLP), and R136.

In terms of assembly, can form homodimers. Expressed in leaves, stems and flower buds.

It localises to the plastid. The protein localises to the chloroplast inner membrane. It is found in the chloroplast. Functionally, putative NADP-dependent oxidoreductase that acts as a positive regulator of chloroplast division. May play a role at an early stage of the division process. In Arabidopsis thaliana (Mouse-ear cress), this protein is Epimerase family protein SDR39U1 homolog, chloroplastic.